Reading from the N-terminus, the 139-residue chain is MRSFEFFEHTADVGIRAYGKSLEEAFSNAALGVFEVITDTSKVKPIEYREIYLNGYDLENLLYKWIEELLYYYDSELMVFSKFDLMIDQDSMTLEGKAWGEKFNGKIHERRTVVKAMTYHQLSIEKTENGYVITFVVDI.

3 residues coordinate Ca(2+): Asp-12, Asp-138, and Ile-139.

This sequence belongs to the archease family.

Functionally, activates the tRNA-splicing ligase complex by facilitating the enzymatic turnover of catalytic subunit RtcB. Acts by promoting the guanylylation of RtcB, a key intermediate step in tRNA ligation. Can also alter the NTP specificity of RtcB such that ATP, dGTP or ITP is used efficiently. In Saccharolobus islandicus (strain M.16.27) (Sulfolobus islandicus), this protein is Protein archease.